A 1690-amino-acid chain; its full sequence is DNA-directed RNA polymerase subunit beta' (1690 aa).

Zn(2+)-binding residues include Cys63, Cys65, Cys78, and Cys81. The Mg(2+) site is built by Asp753, Asp755, and Asp757. 4 residues coordinate Zn(2+): Cys1107, Cys1295, Cys1302, and Cys1305.

This sequence belongs to the RNA polymerase beta' chain family. The RNAP catalytic core consists of 2 alpha, 1 beta, 1 beta' and 1 omega subunit. When a sigma factor is associated with the core the holoenzyme is formed, which can initiate transcription. It depends on Mg(2+) as a cofactor. Requires Zn(2+) as cofactor.

It carries out the reaction RNA(n) + a ribonucleoside 5'-triphosphate = RNA(n+1) + diphosphate. Functionally, DNA-dependent RNA polymerase catalyzes the transcription of DNA into RNA using the four ribonucleoside triphosphates as substrates. In Thermotoga sp. (strain RQ2), this protein is DNA-directed RNA polymerase subunit beta'.